Consider the following 290-residue polypeptide: Shikimate dehydrogenase (NADP(+)) (290 aa).

Residues Ser-18–Ser-20 and Thr-66 contribute to the shikimate site. The Proton acceptor role is filled by Lys-70. Asn-91 and Asp-106 together coordinate shikimate. NADP(+) contacts are provided by residues Gly-130–Ala-134 and Met-230. Tyr-232 contacts shikimate. Gly-253 contributes to the NADP(+) binding site.

Belongs to the shikimate dehydrogenase family. As to quaternary structure, homodimer.

The catalysed reaction is shikimate + NADP(+) = 3-dehydroshikimate + NADPH + H(+). It participates in metabolic intermediate biosynthesis; chorismate biosynthesis; chorismate from D-erythrose 4-phosphate and phosphoenolpyruvate: step 4/7. In terms of biological role, involved in the biosynthesis of the chorismate, which leads to the biosynthesis of aromatic amino acids. Catalyzes the reversible NADPH linked reduction of 3-dehydroshikimate (DHSA) to yield shikimate (SA). This Prosthecochloris aestuarii (strain DSM 271 / SK 413) protein is Shikimate dehydrogenase (NADP(+)).